Here is a 705-residue protein sequence, read N- to C-terminus: Probable E3 ubiquitin-protein ligase MID2 (705 aa).

The RING-type zinc finger occupies 30–80 (CPICLELFEDPLLLPCAHSLCFSCAHRILVSSCSSGESIEPITAFQCPTCR). Residues 137-184 (IACQFCEQDPPRDAVKTCITCEVSYCDRCLRATHPNKKPFTSHRLVEP) form a B box-type 1; degenerate zinc finger. The B box-type 2 zinc-finger motif lies at 190 to 232 (LRGITCLDHENEKVNMYCVSDDQLICALCKLVGRHRDHQVASL). Zn(2+) contacts are provided by C195, H198, C218, and H224. Residues 233-301 (NDRFEKLKQT…IIQQRKQMIA (69 aa)) adopt a coiled-coil conformation. The COS domain occupies 340-399 (LKENDQARFLQSAKNIAERVAMATASSQVLIPDINFNDAFENFALDFSREKKLLEGLDYL). Residues 404 to 504 (PPSIREELCT…EPTRLKTNSQ (101 aa)) form the Fibronectin type-III domain. One can recognise a B30.2/SPRY domain in the interval 486–679 (INQAGSRNSE…ILSGLPAPDF (194 aa)).

The protein belongs to the TRIM/RBCC family. As to quaternary structure, homodimer or heterodimer with MID1. Interacts with IGBP1. Post-translationally, phosphorylated on serine and threonine residues. As to expression, low abundance in brain and lung, with even lower levels in heart, liver, and kidney.

It is found in the cytoplasm. Its subcellular location is the cytoskeleton. It catalyses the reaction S-ubiquitinyl-[E2 ubiquitin-conjugating enzyme]-L-cysteine + [acceptor protein]-L-lysine = [E2 ubiquitin-conjugating enzyme]-L-cysteine + N(6)-ubiquitinyl-[acceptor protein]-L-lysine.. The protein operates within protein modification; protein ubiquitination. E3 ubiquitin ligase that plays a role in microtubule stabilization. Mediates the 'Lys-48'-linked polyubiquitination of LRRK2 to drive its localization to microtubules and its proteasomal degradation in neurons. This ubiquitination inhibits LRRK2 kinase activation by RAB29. The chain is Probable E3 ubiquitin-protein ligase MID2 (Mid2) from Mus musculus (Mouse).